Reading from the N-terminus, the 446-residue chain is tRNA-2-methylthio-N(6)-dimethylallyladenosine synthase (446 aa).

Residues 6-122 (RRYHITTFGC…LGDLLQQVFD (117 aa)) form the MTTase N-terminal domain. Residues cysteine 15, cysteine 51, cysteine 85, cysteine 157, cysteine 161, and cysteine 164 each coordinate [4Fe-4S] cluster. The Radical SAM core domain occupies 143–380 (RDSNITAWVN…NHLVATKAAE (238 aa)). One can recognise a TRAM domain in the interval 383–446 (QRYLGRIEEI…RPFSLTGVIF (64 aa)).

The protein belongs to the methylthiotransferase family. MiaB subfamily. Monomer. [4Fe-4S] cluster serves as cofactor.

The protein localises to the cytoplasm. The catalysed reaction is N(6)-dimethylallyladenosine(37) in tRNA + (sulfur carrier)-SH + AH2 + 2 S-adenosyl-L-methionine = 2-methylsulfanyl-N(6)-dimethylallyladenosine(37) in tRNA + (sulfur carrier)-H + 5'-deoxyadenosine + L-methionine + A + S-adenosyl-L-homocysteine + 2 H(+). In terms of biological role, catalyzes the methylthiolation of N6-(dimethylallyl)adenosine (i(6)A), leading to the formation of 2-methylthio-N6-(dimethylallyl)adenosine (ms(2)i(6)A) at position 37 in tRNAs that read codons beginning with uridine. In Microcystis aeruginosa (strain NIES-843 / IAM M-2473), this protein is tRNA-2-methylthio-N(6)-dimethylallyladenosine synthase.